The sequence spans 479 residues: Glycogen synthase (479 aa).

Residue lysine 15 coordinates ADP-alpha-D-glucose.

This sequence belongs to the glycosyltransferase 1 family. Bacterial/plant glycogen synthase subfamily.

It catalyses the reaction [(1-&gt;4)-alpha-D-glucosyl](n) + ADP-alpha-D-glucose = [(1-&gt;4)-alpha-D-glucosyl](n+1) + ADP + H(+). It functions in the pathway glycan biosynthesis; glycogen biosynthesis. Its function is as follows. Synthesizes alpha-1,4-glucan chains using ADP-glucose. The protein is Glycogen synthase of Histophilus somni (strain 129Pt) (Haemophilus somnus).